A 546-amino-acid polypeptide reads, in one-letter code: CTP synthase (546 aa).

An amidoligase domain region spans residues 1–266; sequence MTTRYIFVTG…DELVVKRFSL (266 aa). Ser-14 is a binding site for CTP. Ser-14 is a UTP binding site. Residues 15–20 and Asp-72 contribute to the ATP site; that span reads SLGKGI. Mg(2+) contacts are provided by Asp-72 and Glu-140. Residues 147-149, 187-192, and Lys-223 each bind CTP; these read DIE and KTKPTQ. Residues 187–192 and Lys-223 contribute to the UTP site; that span reads KTKPTQ. 239-241 is an ATP binding site; that stretch reads KDV. One can recognise a Glutamine amidotransferase type-1 domain in the interval 291 to 542; the sequence is VIGMVGKYIE…VAAASAHQKR (252 aa). Gly-352 contacts L-glutamine. The Nucleophile; for glutamine hydrolysis role is filled by Cys-379. L-glutamine contacts are provided by residues 380-383, Glu-403, and Arg-470; that span reads LGMQ. Residues His-515 and Glu-517 contribute to the active site.

It belongs to the CTP synthase family. In terms of assembly, homotetramer.

It carries out the reaction UTP + L-glutamine + ATP + H2O = CTP + L-glutamate + ADP + phosphate + 2 H(+). The enzyme catalyses L-glutamine + H2O = L-glutamate + NH4(+). It catalyses the reaction UTP + NH4(+) + ATP = CTP + ADP + phosphate + 2 H(+). It functions in the pathway pyrimidine metabolism; CTP biosynthesis via de novo pathway; CTP from UDP: step 2/2. Its activity is regulated as follows. Allosterically activated by GTP, when glutamine is the substrate; GTP has no effect on the reaction when ammonia is the substrate. The allosteric effector GTP functions by stabilizing the protein conformation that binds the tetrahedral intermediate(s) formed during glutamine hydrolysis. Inhibited by the product CTP, via allosteric rather than competitive inhibition. Its function is as follows. Catalyzes the ATP-dependent amination of UTP to CTP with either L-glutamine or ammonia as the source of nitrogen. Regulates intracellular CTP levels through interactions with the four ribonucleotide triphosphates. This is CTP synthase from Shewanella oneidensis (strain ATCC 700550 / JCM 31522 / CIP 106686 / LMG 19005 / NCIMB 14063 / MR-1).